Here is a 359-residue protein sequence, read N- to C-terminus: 3-isopropylmalate dehydrogenase (359 aa).

76 to 89 is a binding site for NAD(+); sequence GPKWDDPSAKTRPE. Substrate-binding residues include arginine 96, arginine 106, arginine 134, and aspartate 223. Positions 223, 247, and 251 each coordinate Mg(2+). Residue 281-293 participates in NAD(+) binding; sequence GSAPDIAGKSVAN.

It belongs to the isocitrate and isopropylmalate dehydrogenases family. LeuB type 1 subfamily. Homodimer. It depends on Mg(2+) as a cofactor. Requires Mn(2+) as cofactor.

The protein localises to the cytoplasm. The catalysed reaction is (2R,3S)-3-isopropylmalate + NAD(+) = 4-methyl-2-oxopentanoate + CO2 + NADH. It participates in amino-acid biosynthesis; L-leucine biosynthesis; L-leucine from 3-methyl-2-oxobutanoate: step 3/4. In terms of biological role, catalyzes the oxidation of 3-carboxy-2-hydroxy-4-methylpentanoate (3-isopropylmalate) to 3-carboxy-4-methyl-2-oxopentanoate. The product decarboxylates to 4-methyl-2 oxopentanoate. The protein is 3-isopropylmalate dehydrogenase of Rhodopirellula baltica (strain DSM 10527 / NCIMB 13988 / SH1).